A 215-amino-acid chain; its full sequence is Mediator of RNA polymerase II transcription subunit 18 (215 aa).

Belongs to the Mediator complex subunit 18 family. Component of the Mediator complex.

The protein localises to the nucleus. Component of the Mediator complex, a coactivator involved in the regulated transcription of nearly all RNA polymerase II-dependent genes. Mediator functions as a bridge to convey information from gene-specific regulatory proteins to the basal RNA polymerase II transcription machinery. Mediator is recruited to promoters by direct interactions with regulatory proteins and serves as a scaffold for the assembly of a functional preinitiation complex with RNA polymerase II and the general transcription factors. The polypeptide is Mediator of RNA polymerase II transcription subunit 18 (MED18) (Aedes aegypti (Yellowfever mosquito)).